A 312-amino-acid polypeptide reads, in one-letter code: Methionyl-tRNA formyltransferase (312 aa).

Residue 117 to 120 (SLLP) participates in (6S)-5,6,7,8-tetrahydrofolate binding.

Belongs to the Fmt family.

The enzyme catalyses L-methionyl-tRNA(fMet) + (6R)-10-formyltetrahydrofolate = N-formyl-L-methionyl-tRNA(fMet) + (6S)-5,6,7,8-tetrahydrofolate + H(+). Attaches a formyl group to the free amino group of methionyl-tRNA(fMet). The formyl group appears to play a dual role in the initiator identity of N-formylmethionyl-tRNA by promoting its recognition by IF2 and preventing the misappropriation of this tRNA by the elongation apparatus. This Bordetella pertussis (strain Tohama I / ATCC BAA-589 / NCTC 13251) protein is Methionyl-tRNA formyltransferase.